We begin with the raw amino-acid sequence, 658 residues long: Glycogen debranching enzyme (658 aa).

Residue Asp-336 is the Nucleophile of the active site. Glu-371 functions as the Proton donor in the catalytic mechanism. Residues 459–486 (EANGEENRDGTNSNYSDNNGKEGLGGPL) are disordered.

Belongs to the glycosyl hydrolase 13 family.

The catalysed reaction is Hydrolysis of (1-&gt;6)-alpha-D-glucosidic linkages to branches with degrees of polymerization of three or four glucose residues in limit dextrin.. It functions in the pathway glycan degradation; glycogen degradation. In terms of biological role, removes maltotriose and maltotetraose chains that are attached by 1,6-alpha-linkage to the limit dextrin main chain, generating a debranched limit dextrin. This chain is Glycogen debranching enzyme, found in Salmonella gallinarum (strain 287/91 / NCTC 13346).